The chain runs to 528 residues: Phenylalanine--tRNA ligase alpha subunit (528 aa).

Positions 365 and 444 each coordinate L-phenylalanine. E446 lines the Mg(2+) pocket. Residue F469 coordinates L-phenylalanine.

The protein belongs to the class-II aminoacyl-tRNA synthetase family. Phe-tRNA synthetase alpha subunit type 2 subfamily. As to quaternary structure, tetramer of two alpha and two beta subunits. Mg(2+) is required as a cofactor.

The protein localises to the cytoplasm. It catalyses the reaction tRNA(Phe) + L-phenylalanine + ATP = L-phenylalanyl-tRNA(Phe) + AMP + diphosphate + H(+). In Borreliella burgdorferi (strain ATCC 35210 / DSM 4680 / CIP 102532 / B31) (Borrelia burgdorferi), this protein is Phenylalanine--tRNA ligase alpha subunit.